The chain runs to 312 residues: Malate dehydrogenase (312 aa).

NAD(+)-binding positions include 12 to 17 (GAGFTG) and D36. 2 residues coordinate substrate: R87 and R93. Residues N100 and 123-125 (LTN) each bind NAD(+). N125 is a binding site for substrate. A Phosphoserine modification is found at S149. Position 156 (R156) interacts with substrate. The active-site Proton acceptor is H180.

It belongs to the LDH/MDH superfamily. MDH type 3 family.

The catalysed reaction is (S)-malate + NAD(+) = oxaloacetate + NADH + H(+). Functionally, catalyzes the reversible oxidation of malate to oxaloacetate. The polypeptide is Malate dehydrogenase (Bacillus anthracis (strain A0248)).